The chain runs to 1302 residues: Cingulin-like protein 1 (1302 aa).

The tract at residues 1–554 (MELYFGEYQH…ELTQQTNEET (554 aa)) is head. The ZIM motif lies at 37 to 51 (AGSYGVSIRVQGIDG). Residues 75 to 104 (PFPPPVINNLPLHSSNGSVPKENSEELQLP) are disordered. Phosphoserine is present on residues Ser-112 and Ser-202. Disordered regions lie at residues 186-209 (KKPW…EDPA), 251-305 (FTSG…TPTS), and 364-392 (PGLQ…VDSA). A compositionally biased stretch (polar residues) spans 195–204 (PSNSQPTSPS). Residues 264–282 (AHPETKKTRPDVLPFRRQD) show a composition bias toward basic and acidic residues. Residues Ser-283, Ser-297, and Ser-298 each carry the phosphoserine modification. The span at 296–305 (SSSSSTTPTS) shows a compositional bias: low complexity. Positions 366-377 (LQRRGRSGKRNR) are enriched in basic residues. Residues 378 to 388 (INTDDRKRSRS) are compositionally biased toward basic and acidic residues. A phosphoserine mark is found at Ser-388, Ser-391, and Ser-486. A coiled-coil region spans residues 604–1258 (NSTSEVKDLL…QLNSMKKDLR (655 aa)). Residues 655–664 (RSQHNEKVEE) are compositionally biased toward basic and acidic residues. Residues 655-675 (RSQHNEKVEENSTLQQRLEES) are disordered. Ser-708 carries the post-translational modification Phosphoserine. Disordered stretches follow at residues 903 to 929 (AAQG…SEQK) and 1263 to 1287 (PSKV…YEAP). Residues 917–929 (QLSEKLKEESEQK) are compositionally biased toward basic and acidic residues. The interval 1263-1302 (PSKVLDDMDDDDDLSTDGGSLYEAPVSYTFSKDSTVASQI) is tail.

This sequence belongs to the cingulin family. In terms of assembly, homodimer or oligomer. Interacts with CD2AP and SH3BP1; probably part of a complex at cell junctions. In terms of tissue distribution, smooth muscle, spleen, testis, fetal brain, amygdala, corpus callosum, cerebellum, thalamus and subthalamic nucleus of adult brain.

It is found in the cell junction. The protein resides in the tight junction. Its function is as follows. May be involved in anchoring the apical junctional complex, especially tight junctions, to actin-based cytoskeletons. This chain is Cingulin-like protein 1 (CGNL1), found in Homo sapiens (Human).